The sequence spans 314 residues: Pseudouridine-5'-phosphate glycosidase (314 aa).

The Proton donor role is filled by glutamate 30. Residues lysine 91 and valine 111 each coordinate substrate. Aspartate 143 contacts Mn(2+). Substrate is bound at residue 145 to 147 (SAD). Lysine 164 serves as the catalytic Nucleophile.

It belongs to the pseudouridine-5'-phosphate glycosidase family. In terms of assembly, homotrimer. It depends on Mn(2+) as a cofactor.

It catalyses the reaction D-ribose 5-phosphate + uracil = psi-UMP + H2O. In terms of biological role, catalyzes the reversible cleavage of pseudouridine 5'-phosphate (PsiMP) to ribose 5-phosphate and uracil. Functions biologically in the cleavage direction, as part of a pseudouridine degradation pathway. The protein is Pseudouridine-5'-phosphate glycosidase of Cupriavidus pinatubonensis (strain JMP 134 / LMG 1197) (Cupriavidus necator (strain JMP 134)).